A 318-amino-acid chain; its full sequence is Nisin-resistance protein (318 aa).

A helical membrane pass occupies residues 7 to 28; sequence ILLGLVAVCALFLGIIYLWGYK.

The protein resides in the cell membrane. The protein is Nisin-resistance protein (nsr) of Lactococcus lactis subsp. lactis (Streptococcus lactis).